A 316-amino-acid polypeptide reads, in one-letter code: MSEQTTAGLPKAIFLMGPTASGKTALAIALRQALPVELISVDSALIYRGMDIGTAKPSAEELALAPHRLLDIRDPSEAYSAAEFRRDALVEMAEITRRGNIPLLVGGTMLYYKALLEGLSPLPSADPEVRQRIEQMAGEAGWEALHRQLCDIDPVAANRIHPNDPQRLSRALEVFFISGKTLTELTKISGEILPYDVSQFAIAPASRELIHQRIEQRFHQMLASGFEAEARALFARGDLHTEMPSIRCVGYRQMWSYLAGETDYDDMVYRGICATRQLAKRQMTWLRGWKDVHWLDSEQPDAAYSRVLQVLSAKPG.

17 to 24 (GPTASGKT) contacts ATP. 19-24 (TASGKT) is a binding site for substrate. Interaction with substrate tRNA regions lie at residues 42–45 (DSAL), 166–170 (QRLSR), and 247–252 (RCVGYR).

It belongs to the IPP transferase family. As to quaternary structure, monomer. It depends on Mg(2+) as a cofactor.

The catalysed reaction is adenosine(37) in tRNA + dimethylallyl diphosphate = N(6)-dimethylallyladenosine(37) in tRNA + diphosphate. Functionally, catalyzes the transfer of a dimethylallyl group onto the adenine at position 37 in tRNAs that read codons beginning with uridine, leading to the formation of N6-(dimethylallyl)adenosine (i(6)A). The protein is tRNA dimethylallyltransferase of Erwinia tasmaniensis (strain DSM 17950 / CFBP 7177 / CIP 109463 / NCPPB 4357 / Et1/99).